The sequence spans 538 residues: Atos homolog protein B (538 aa).

3 disordered regions span residues 1–99 (MRHV…PSTV), 165–185 (QGGQ…QLHT), and 199–270 (KSPV…GTLG). A compositionally biased stretch (pro residues) spans 227 to 238 (HTPPGPGPPGPC). A phosphoserine mark is found at serine 254 and serine 255. Residues 348-430 (LLGNFEESLL…VPKVGTIQVT (83 aa)) are required for macropage invasion. The interval 436–444 (QTVVKMFLV) is transactivation domain 1 (TAD1).

The protein belongs to the ATOS family.

It localises to the nucleus. Functionally, transcription regulator that syncronizes transcriptional and translational programs to promote macrophage invasion of tissues. The protein is Atos homolog protein B of Mus musculus (Mouse).